Reading from the N-terminus, the 175-residue chain is Large ribosomal subunit protein uL10 (175 aa).

This sequence belongs to the universal ribosomal protein uL10 family. Part of the ribosomal stalk of the 50S ribosomal subunit. The N-terminus interacts with L11 and the large rRNA to form the base of the stalk. The C-terminus forms an elongated spine to which L12 dimers bind in a sequential fashion forming a multimeric L10(L12)X complex.

Functionally, forms part of the ribosomal stalk, playing a central role in the interaction of the ribosome with GTP-bound translation factors. The sequence is that of Large ribosomal subunit protein uL10 from Synechococcus elongatus (strain ATCC 33912 / PCC 7942 / FACHB-805) (Anacystis nidulans R2).